The chain runs to 103 residues: Urease subunit beta (103 aa).

This sequence belongs to the urease beta subunit family. In terms of assembly, heterotrimer of UreA (gamma), UreB (beta) and UreC (alpha) subunits. Three heterotrimers associate to form the active enzyme.

It localises to the cytoplasm. The enzyme catalyses urea + 2 H2O + H(+) = hydrogencarbonate + 2 NH4(+). It participates in nitrogen metabolism; urea degradation; CO(2) and NH(3) from urea (urease route): step 1/1. This Blochmanniella floridana protein is Urease subunit beta.